The primary structure comprises 277 residues: Phosphatidylserine decarboxylase proenzyme (277 aa).

Catalysis depends on charge relay system; for autoendoproteolytic cleavage activity residues D88, H144, and S242. The active-site Schiff-base intermediate with substrate; via pyruvic acid; for decarboxylase activity is S242. S242 carries the post-translational modification Pyruvic acid (Ser); by autocatalysis.

Belongs to the phosphatidylserine decarboxylase family. PSD-B subfamily. Prokaryotic type I sub-subfamily. In terms of assembly, heterodimer of a large membrane-associated beta subunit and a small pyruvoyl-containing alpha subunit. Pyruvate is required as a cofactor. Post-translationally, is synthesized initially as an inactive proenzyme. Formation of the active enzyme involves a self-maturation process in which the active site pyruvoyl group is generated from an internal serine residue via an autocatalytic post-translational modification. Two non-identical subunits are generated from the proenzyme in this reaction, and the pyruvate is formed at the N-terminus of the alpha chain, which is derived from the carboxyl end of the proenzyme. The autoendoproteolytic cleavage occurs by a canonical serine protease mechanism, in which the side chain hydroxyl group of the serine supplies its oxygen atom to form the C-terminus of the beta chain, while the remainder of the serine residue undergoes an oxidative deamination to produce ammonia and the pyruvoyl prosthetic group on the alpha chain. During this reaction, the Ser that is part of the protease active site of the proenzyme becomes the pyruvoyl prosthetic group, which constitutes an essential element of the active site of the mature decarboxylase.

It is found in the cell membrane. The catalysed reaction is a 1,2-diacyl-sn-glycero-3-phospho-L-serine + H(+) = a 1,2-diacyl-sn-glycero-3-phosphoethanolamine + CO2. It functions in the pathway phospholipid metabolism; phosphatidylethanolamine biosynthesis; phosphatidylethanolamine from CDP-diacylglycerol: step 2/2. Catalyzes the formation of phosphatidylethanolamine (PtdEtn) from phosphatidylserine (PtdSer). The sequence is that of Phosphatidylserine decarboxylase proenzyme from Psychrobacter cryohalolentis (strain ATCC BAA-1226 / DSM 17306 / VKM B-2378 / K5).